The following is a 290-amino-acid chain: Ciliary microtubule inner protein 6 (290 aa).

Residues 76-112 (ENQGDWWPHGKGLENPFQPPYDTKSTQRSDFKKPTCP) are disordered. 2 mn regions span residues 128–160 (GIVP…ARKT) and 213–246 (SAES…IRVA). The tract at residues 197 to 228 (SGSCSSEQSKKTEKGNSAESKMISPGLCRQNS) is disordered.

The protein localises to the cell projection. The protein resides in the cilium. In Bos taurus (Bovine), this protein is Ciliary microtubule inner protein 6 (CIMIP6).